We begin with the raw amino-acid sequence, 241 residues long: Ribonuclease PH (241 aa).

Phosphate contacts are provided by residues Arg-89 and 127 to 129 (GTR).

This sequence belongs to the RNase PH family. Homohexameric ring arranged as a trimer of dimers.

The enzyme catalyses tRNA(n+1) + phosphate = tRNA(n) + a ribonucleoside 5'-diphosphate. Its function is as follows. Phosphorolytic 3'-5' exoribonuclease that plays an important role in tRNA 3'-end maturation. Removes nucleotide residues following the 3'-CCA terminus of tRNAs; can also add nucleotides to the ends of RNA molecules by using nucleoside diphosphates as substrates, but this may not be physiologically important. Probably plays a role in initiation of 16S rRNA degradation (leading to ribosome degradation) during starvation. The sequence is that of Ribonuclease PH from Xylella fastidiosa (strain M23).